Reading from the N-terminus, the 347-residue chain is Chlorophyllase type 0 (347 aa).

Positions 1–19 are cleaved as a signal peptide; the sequence is MAKLLLLIFGVFIFVNSQA. The propeptide occupies 20-30; the sequence is QTFPTILEKHN. The GXSXG motif lies at 160-164; it reads GHSRG. Ser162 (nucleophile) is an active-site residue. Asp191 (charge relay system) is an active-site residue. Residues Asn215, Asn229, and Asn251 are each glycosylated (N-linked (GlcNAc...) asparagine). His262 acts as the Charge relay system in catalysis. The N-linked (GlcNAc...) asparagine glycan is linked to Asn321.

This sequence belongs to the AB hydrolase superfamily. Lipase family.

It catalyses the reaction a chlorophyll + H2O = a chlorophyllide + phytol + H(+). The enzyme catalyses chlorophyll a + H2O = phytol + chlorophyllide a + H(+). It functions in the pathway porphyrin-containing compound metabolism; chlorophyll degradation. Its activity is regulated as follows. Inhibited by diisopropyl fluorophosphate (DFP), phenylmethanesulfonyl fluoride (PMSF) or p-chloromercuribenzoic acid (PCMB), but not by N-ethylmaleimide (NEM) or iodoacetamide. Catalyzes the hydrolysis of ester bond in chlorophyll to yield chlorophyllide and phytol. This Chenopodium album (Fat hen) protein is Chlorophyllase type 0.